The sequence spans 469 residues: 3-isopropylmalate dehydratase large subunit (469 aa).

[4Fe-4S] cluster-binding residues include Cys-347, Cys-408, and Cys-411.

This sequence belongs to the aconitase/IPM isomerase family. LeuC type 1 subfamily. As to quaternary structure, heterodimer of LeuC and LeuD. [4Fe-4S] cluster serves as cofactor.

It carries out the reaction (2R,3S)-3-isopropylmalate = (2S)-2-isopropylmalate. It functions in the pathway amino-acid biosynthesis; L-leucine biosynthesis; L-leucine from 3-methyl-2-oxobutanoate: step 2/4. In terms of biological role, catalyzes the isomerization between 2-isopropylmalate and 3-isopropylmalate, via the formation of 2-isopropylmaleate. This Haemophilus influenzae (strain ATCC 51907 / DSM 11121 / KW20 / Rd) protein is 3-isopropylmalate dehydratase large subunit.